Here is a 363-residue protein sequence, read N- to C-terminus: Peptide chain release factor 1 (363 aa).

Position 237 is an N5-methylglutamine (glutamine 237).

It belongs to the prokaryotic/mitochondrial release factor family. Post-translationally, methylated by PrmC. Methylation increases the termination efficiency of RF1.

Its subcellular location is the cytoplasm. Functionally, peptide chain release factor 1 directs the termination of translation in response to the peptide chain termination codons UAG and UAA. The chain is Peptide chain release factor 1 (prfA) from Mycoplasma capricolum subsp. capricolum (strain California kid / ATCC 27343 / NCTC 10154).